The sequence spans 193 residues: Probable gluconokinase (193 aa).

Glycine 18–serine 25 contacts ATP.

Belongs to the gluconokinase GntK/GntV family.

It localises to the cytoplasm. The enzyme catalyses D-gluconate + ATP = 6-phospho-D-gluconate + ADP + H(+). The protein operates within carbohydrate acid metabolism; D-gluconate degradation. The protein is Probable gluconokinase of Saccharomyces cerevisiae (strain ATCC 204508 / S288c) (Baker's yeast).